The sequence spans 330 residues: Glucan endo-1,3-beta-glucosidase GIII (330 aa).

A signal peptide spans 1 to 25 (MARKGVDVAVALVLVALAAFPAVHS). Catalysis depends on glutamate 117, which acts as the Proton donor. The active-site Nucleophile is the glutamate 255.

The protein belongs to the glycosyl hydrolase 17 family.

The enzyme catalyses Hydrolysis of (1-&gt;3)-beta-D-glucosidic linkages in (1-&gt;3)-beta-D-glucans.. In terms of biological role, may provide a degree of protection against microbial invasion of germinated barley grain through its ability to degrade fungal cell wall polysaccharides. The protein is Glucan endo-1,3-beta-glucosidase GIII of Hordeum vulgare (Barley).